A 370-amino-acid polypeptide reads, in one-letter code: 3-isopropylmalate dehydrogenase 1 (370 aa).

Substrate is bound by residues Arg-98, Arg-108, Arg-136, and Asp-227. 3 residues coordinate Mg(2+): Asp-227, Asp-251, and Asp-255. 289-301 (GSAPDIAGQGIAN) is an NAD(+) binding site.

The protein belongs to the isocitrate and isopropylmalate dehydrogenases family. LeuB type 1 subfamily. Homodimer. Requires Mg(2+) as cofactor. Mn(2+) serves as cofactor.

The protein resides in the cytoplasm. It catalyses the reaction (2R,3S)-3-isopropylmalate + NAD(+) = 4-methyl-2-oxopentanoate + CO2 + NADH. It participates in amino-acid biosynthesis; L-leucine biosynthesis; L-leucine from 3-methyl-2-oxobutanoate: step 3/4. Catalyzes the oxidation of 3-carboxy-2-hydroxy-4-methylpentanoate (3-isopropylmalate) to 3-carboxy-4-methyl-2-oxopentanoate. The product decarboxylates to 4-methyl-2 oxopentanoate. The sequence is that of 3-isopropylmalate dehydrogenase 1 from Bordetella bronchiseptica (strain ATCC BAA-588 / NCTC 13252 / RB50) (Alcaligenes bronchisepticus).